The following is a 390-amino-acid chain: tRNA (guanine(26)-N(2))-dimethyltransferase (390 aa).

The Trm1 methyltransferase domain occupies 4 to 378; sequence HIIEEGLVKI…MPLDELKQLI (375 aa). S-adenosyl-L-methionine contacts are provided by R37, R67, D85, D112, and A113. Positions 245, 248, 265, and 268 each coordinate Zn(2+).

Belongs to the class I-like SAM-binding methyltransferase superfamily. Trm1 family.

It carries out the reaction guanosine(26) in tRNA + 2 S-adenosyl-L-methionine = N(2)-dimethylguanosine(26) in tRNA + 2 S-adenosyl-L-homocysteine + 2 H(+). Its function is as follows. Dimethylates a single guanine residue at position 26 of a number of tRNAs using S-adenosyl-L-methionine as donor of the methyl groups. This Methanosphaera stadtmanae (strain ATCC 43021 / DSM 3091 / JCM 11832 / MCB-3) protein is tRNA (guanine(26)-N(2))-dimethyltransferase.